The primary structure comprises 316 residues: Retinol dehydrogenase 12 (316 aa).

Position 46–52 (46–52 (GANTGIG)) interacts with NADP(+). Ser175 serves as a coordination point for substrate. Tyr200 acts as the Proton acceptor in catalysis.

Belongs to the short-chain dehydrogenases/reductases (SDR) family. As to expression, widely expressed, mostly in retina, kidney, brain, skeletal muscle, pancreas and stomach.

The protein localises to the endoplasmic reticulum membrane. The catalysed reaction is all-trans-retinol + NADP(+) = all-trans-retinal + NADPH + H(+). The enzyme catalyses 11-cis-retinol + NADP(+) = 11-cis-retinal + NADPH + H(+). It catalyses the reaction 9-cis-retinol + NADP(+) = 9-cis-retinal + NADPH + H(+). It carries out the reaction a 4-hydroxynonen-1-ol + NADP(+) = a 4-hydroxynonenal + NADPH + H(+). The catalysed reaction is (E)-non-2-en-1-ol + NADP(+) = (E)-non-2-enal + NADPH + H(+). The enzyme catalyses (Z)-non-6-en-1-ol + NADP(+) = (Z)-non-6-enal + NADPH + H(+). It catalyses the reaction nonan-1-ol + NADP(+) = nonanal + NADPH + H(+). Its pathway is cofactor metabolism; retinol metabolism. Retinoids dehydrogenase/reductase with a clear preference for NADP. Displays high activity towards 9-cis, 11-cis and all-trans-retinal. Shows very weak activity towards 13-cis-retinol. Also exhibits activity, albeit with lower affinity than for retinaldehydes, towards lipid peroxidation products (C9 aldehydes) such as 4-hydroxynonenal and trans-2-nonenal. May play an important function in photoreceptor cells to detoxify 4-hydroxynonenal and potentially other toxic aldehyde products resulting from lipid peroxidation. Has no dehydrogenase activity towards steroids. The sequence is that of Retinol dehydrogenase 12 (RDH12) from Homo sapiens (Human).